Here is a 429-residue protein sequence, read N- to C-terminus: Adenylosuccinate synthetase (429 aa).

Residues 12–18 and 40–42 contribute to the GTP site; these read GDEGKGK and GHT. The active-site Proton acceptor is Asp-13. 2 residues coordinate Mg(2+): Asp-13 and Gly-40. IMP contacts are provided by residues 13 to 16, 38 to 41, Thr-129, Arg-143, Gln-223, Thr-238, and Arg-302; these read DEGK and NAGH. His-41 serves as the catalytic Proton donor. 298-304 contributes to the substrate binding site; that stretch reads TVTGRPR. Residues Arg-304, 330–332, and 412–414 contribute to the GTP site; these read KLD and STS.

It belongs to the adenylosuccinate synthetase family. In terms of assembly, homodimer. Mg(2+) serves as cofactor.

Its subcellular location is the cytoplasm. The catalysed reaction is IMP + L-aspartate + GTP = N(6)-(1,2-dicarboxyethyl)-AMP + GDP + phosphate + 2 H(+). It functions in the pathway purine metabolism; AMP biosynthesis via de novo pathway; AMP from IMP: step 1/2. Plays an important role in the de novo pathway of purine nucleotide biosynthesis. Catalyzes the first committed step in the biosynthesis of AMP from IMP. The sequence is that of Adenylosuccinate synthetase from Gluconobacter oxydans (strain 621H) (Gluconobacter suboxydans).